The following is a 316-amino-acid chain: Aspartate-semialdehyde dehydrogenase (316 aa).

Residues 13–16 and 41–42 each bind NADP(+); these read TGAV and RS. Phosphate is bound at residue Arg101. Cys132 (acyl-thioester intermediate) is an active-site residue. Position 159 (Gln159) interacts with substrate. 162-163 is a binding site for NADP(+); the sequence is SG. Lys216 is a phosphate binding site. Residue Arg238 coordinates substrate. Residue His245 is the Proton acceptor of the active site. An NADP(+)-binding site is contributed by Asn316.

It belongs to the aspartate-semialdehyde dehydrogenase family. As to quaternary structure, homodimer.

It carries out the reaction L-aspartate 4-semialdehyde + phosphate + NADP(+) = 4-phospho-L-aspartate + NADPH + H(+). It participates in amino-acid biosynthesis; L-lysine biosynthesis via DAP pathway; (S)-tetrahydrodipicolinate from L-aspartate: step 2/4. It functions in the pathway amino-acid biosynthesis; L-methionine biosynthesis via de novo pathway; L-homoserine from L-aspartate: step 2/3. The protein operates within amino-acid biosynthesis; L-threonine biosynthesis; L-threonine from L-aspartate: step 2/5. Functionally, catalyzes the NADPH-dependent formation of L-aspartate-semialdehyde (L-ASA) by the reductive dephosphorylation of L-aspartyl-4-phosphate. In Vibrio mimicus, this protein is Aspartate-semialdehyde dehydrogenase (asd).